The primary structure comprises 222 residues: Putative cobalt transport protein CbiM (222 aa).

6 helical membrane-spanning segments follow: residues 8 to 28, 43 to 63, 75 to 95, 107 to 127, 134 to 154, and 178 to 198; these read LPME…GYGI, PLLA…LPSV, LGAI…VLLF, TLGA…YLVF, LNIT…TYLT, and IFAI…ALLW.

The protein belongs to the CbiM family. Forms an energy-coupling factor (ECF) transporter complex composed of an ATP-binding protein (A component, CbiO), a transmembrane protein (T component, CbiQ) and 2 possible substrate-capture proteins (S components, CbiM and CbiN) of unknown stoichimetry.

Its subcellular location is the cell membrane. It participates in cofactor biosynthesis; adenosylcobalamin biosynthesis. In terms of biological role, part of the energy-coupling factor (ECF) transporter complex CbiMNOQ involved in cobalt import. The chain is Putative cobalt transport protein CbiM from Methanococcus voltae (strain ATCC BAA-1334 / A3).